The chain runs to 131 residues: Large-conductance mechanosensitive channel (131 aa).

Helical transmembrane passes span 8–28 (FAVRGNVIDLAVGVIIGGAFG), 30–50 (IVSSLVNDIIMPLVGLILGGI), and 67–87 (GAFLQTVVDFLVIAFSIFLFV).

Belongs to the MscL family. As to quaternary structure, homopentamer.

The protein localises to the cell membrane. Its function is as follows. Channel that opens in response to stretch forces in the membrane lipid bilayer. May participate in the regulation of osmotic pressure changes within the cell. The chain is Large-conductance mechanosensitive channel from Anoxybacillus flavithermus (strain DSM 21510 / WK1).